Here is a 756-residue protein sequence, read N- to C-terminus: Subtilisin-like protease SBT3.9 (756 aa).

The signal sequence occupies residues 1–25 (MSKTILFLALFLSIVLNVQISFVVA). Residues 26 to 108 (ESKVYVVYLG…VIPNTLYEMT (83 aa)) constitute a propeptide, activation peptide. The 78-residue stretch at 29–106 (VYVVYLGEKE…VQVIPNTLYE (78 aa)) folds into the Inhibitor I9 domain. The Peptidase S8 domain occupies 112–603 (TWDYLGVSPG…GGLINPEKAV (492 aa)). The active-site Charge relay system is Asp-142. 2 N-linked (GlcNAc...) asparagine glycosylation sites follow: Asn-175 and Asn-202. The Charge relay system role is filled by His-218. 4 N-linked (GlcNAc...) asparagine glycosylation sites follow: Asn-233, Asn-357, Asn-395, and Asn-519. The PA domain occupies 386-460 (DCEKLSANPN…ELGTDILFYI (75 aa)). Ser-534 acts as the Charge relay system in catalysis.

It belongs to the peptidase S8 family.

The protein localises to the secreted. The sequence is that of Subtilisin-like protease SBT3.9 from Arabidopsis thaliana (Mouse-ear cress).